Here is a 157-residue protein sequence, read N- to C-terminus: Small ribosomal subunit protein uS7 (157 aa).

The protein belongs to the universal ribosomal protein uS7 family. Part of the 30S ribosomal subunit. Contacts proteins S9 and S11.

In terms of biological role, one of the primary rRNA binding proteins, it binds directly to 16S rRNA where it nucleates assembly of the head domain of the 30S subunit. Is located at the subunit interface close to the decoding center, probably blocks exit of the E-site tRNA. The protein is Small ribosomal subunit protein uS7 of Variovorax paradoxus (strain S110).